We begin with the raw amino-acid sequence, 285 residues long: Prephenate dehydratase (285 aa).

A Prephenate dehydratase domain is found at 2–183; that stretch reads KVGYLGPAAT…NHTRFVILSP (182 aa). The ACT domain maps to 204-281; it reads MVMLPQDDQS…CKVRLLGAYQ (78 aa).

The catalysed reaction is prephenate + H(+) = 3-phenylpyruvate + CO2 + H2O. Its pathway is amino-acid biosynthesis; L-phenylalanine biosynthesis; phenylpyruvate from prephenate: step 1/1. In Bacillus subtilis (strain 168), this protein is Prephenate dehydratase (pheA).